The sequence spans 738 residues: Elongation factor G, mitochondrial (738 aa).

Residues 1–20 (MCIGPAPTPETEEELPPSPQ) form a disordered region. The 289-residue stretch at 32–320 (RFQRNIGVSA…GVCAYLPNPA (289 aa)) folds into the tr-type G domain. GTP contacts are provided by residues 41–48 (AHIDSGKT), 118–122 (DTPGH), and 172–175 (NKMD).

This sequence belongs to the TRAFAC class translation factor GTPase superfamily. Classic translation factor GTPase family. EF-G/EF-2 subfamily.

The protein localises to the mitochondrion. It participates in protein biosynthesis; polypeptide chain elongation. Mitochondrial GTPase that catalyzes the GTP-dependent ribosomal translocation step during translation elongation. During this step, the ribosome changes from the pre-translocational (PRE) to the post-translocational (POST) state as the newly formed A-site-bound peptidyl-tRNA and P-site-bound deacylated tRNA move to the P and E sites, respectively. Catalyzes the coordinated movement of the two tRNA molecules, the mRNA and conformational changes in the ribosome. This Laccaria bicolor (strain S238N-H82 / ATCC MYA-4686) (Bicoloured deceiver) protein is Elongation factor G, mitochondrial.